A 285-amino-acid polypeptide reads, in one-letter code: Phosphatidylserine decarboxylase proenzyme (285 aa).

Active-site charge relay system; for autoendoproteolytic cleavage activity residues include Asp89, His146, and Ser252. Catalysis depends on Ser252, which acts as the Schiff-base intermediate with substrate; via pyruvic acid; for decarboxylase activity. Ser252 bears the Pyruvic acid (Ser); by autocatalysis mark.

The protein belongs to the phosphatidylserine decarboxylase family. PSD-B subfamily. Prokaryotic type I sub-subfamily. In terms of assembly, heterodimer of a large membrane-associated beta subunit and a small pyruvoyl-containing alpha subunit. The cofactor is pyruvate. Post-translationally, is synthesized initially as an inactive proenzyme. Formation of the active enzyme involves a self-maturation process in which the active site pyruvoyl group is generated from an internal serine residue via an autocatalytic post-translational modification. Two non-identical subunits are generated from the proenzyme in this reaction, and the pyruvate is formed at the N-terminus of the alpha chain, which is derived from the carboxyl end of the proenzyme. The autoendoproteolytic cleavage occurs by a canonical serine protease mechanism, in which the side chain hydroxyl group of the serine supplies its oxygen atom to form the C-terminus of the beta chain, while the remainder of the serine residue undergoes an oxidative deamination to produce ammonia and the pyruvoyl prosthetic group on the alpha chain. During this reaction, the Ser that is part of the protease active site of the proenzyme becomes the pyruvoyl prosthetic group, which constitutes an essential element of the active site of the mature decarboxylase.

The protein localises to the cell membrane. It catalyses the reaction a 1,2-diacyl-sn-glycero-3-phospho-L-serine + H(+) = a 1,2-diacyl-sn-glycero-3-phosphoethanolamine + CO2. It participates in phospholipid metabolism; phosphatidylethanolamine biosynthesis; phosphatidylethanolamine from CDP-diacylglycerol: step 2/2. Functionally, catalyzes the formation of phosphatidylethanolamine (PtdEtn) from phosphatidylserine (PtdSer). This chain is Phosphatidylserine decarboxylase proenzyme, found in Vibrio campbellii (strain ATCC BAA-1116).